A 191-amino-acid chain; its full sequence is Thymidine kinase (191 aa).

ATP-binding positions include 9–16 (GSMNSGKT) and 85–88 (DESQ). Residue Glu-86 is the Proton acceptor of the active site. Positions 143, 146, 181, and 184 each coordinate Zn(2+).

The protein belongs to the thymidine kinase family. As to quaternary structure, homotetramer.

The protein localises to the cytoplasm. It catalyses the reaction thymidine + ATP = dTMP + ADP + H(+). In Listeria innocua serovar 6a (strain ATCC BAA-680 / CLIP 11262), this protein is Thymidine kinase.